Reading from the N-terminus, the 345-residue chain is UDP-3-O-acylglucosamine N-acyltransferase (345 aa).

The active-site Proton acceptor is His239.

Belongs to the transferase hexapeptide repeat family. LpxD subfamily. In terms of assembly, homotrimer.

It catalyses the reaction a UDP-3-O-[(3R)-3-hydroxyacyl]-alpha-D-glucosamine + a (3R)-hydroxyacyl-[ACP] = a UDP-2-N,3-O-bis[(3R)-3-hydroxyacyl]-alpha-D-glucosamine + holo-[ACP] + H(+). Its pathway is bacterial outer membrane biogenesis; LPS lipid A biosynthesis. Functionally, catalyzes the N-acylation of UDP-3-O-acylglucosamine using 3-hydroxyacyl-ACP as the acyl donor. Is involved in the biosynthesis of lipid A, a phosphorylated glycolipid that anchors the lipopolysaccharide to the outer membrane of the cell. This Geobacter metallireducens (strain ATCC 53774 / DSM 7210 / GS-15) protein is UDP-3-O-acylglucosamine N-acyltransferase.